The sequence spans 333 residues: L-lactate dehydrogenase B chain (333 aa).

NAD(+) is bound by residues glycine 29–lysine 57 and arginine 99. Residues arginine 106, asparagine 138, and arginine 169 each coordinate substrate. NAD(+) is bound at residue asparagine 138. The Proton acceptor role is filled by histidine 193. Threonine 248 provides a ligand contact to substrate.

It belongs to the LDH/MDH superfamily. LDH family. Homotetramer.

It is found in the cytoplasm. The enzyme catalyses (S)-lactate + NAD(+) = pyruvate + NADH + H(+). Its pathway is fermentation; pyruvate fermentation to lactate; (S)-lactate from pyruvate: step 1/1. Interconverts simultaneously and stereospecifically pyruvate and lactate with concomitant interconversion of NADH and NAD(+). The polypeptide is L-lactate dehydrogenase B chain (LDHB) (Gallus gallus (Chicken)).